We begin with the raw amino-acid sequence, 801 residues long: Na(+)/H(+) antiporter subunit A1 (801 aa).

Helical transmembrane passes span 1–21 (MSLL…IPIL), 28–48 (IHLG…MLTL), 79–99 (LGLL…LYSI), 117–137 (LFMG…LYLF), 166–186 (LIIT…LAIP), 206–226 (PFFI…SAQF), 265–285 (IFAA…ITLF), 300–320 (ILAF…GIGA), 337–357 (FTAA…LFMI), 373–393 (LGGL…TALS), 427–447 (LGYL…VYSI), 472–492 (ILML…GLFP), 522–542 (GLTP…LLIV), 591–611 (LVII…SVPF), 623–643 (IFEV…LFAK), 646–666 (LFNI…FIFF), 671–691 (LALT…LCFY), 707–727 (LTNA…GLIA), and 764–784 (MDTL…YTMI).

It belongs to the CPA3 antiporters (TC 2.A.63) subunit A family. May form a heterooligomeric complex that consists of seven subunits: mnhA1, mnhB1, mnhC1, mnhD1, mnhE1, mnhF1 and mnhG1.

Its subcellular location is the cell membrane. In terms of biological role, mnh complex is a Na(+)/H(+) antiporter involved in Na(+) excretion. In Staphylococcus aureus (strain bovine RF122 / ET3-1), this protein is Na(+)/H(+) antiporter subunit A1 (mnhA1).